Reading from the N-terminus, the 340-residue chain is L-threonine 3-dehydrogenase (340 aa).

Cysteine 38 contacts Zn(2+). Residues threonine 40 and histidine 43 each act as charge relay system in the active site. Zn(2+) is bound by residues histidine 63, glutamate 64, cysteine 93, cysteine 96, cysteine 99, and cysteine 107. NAD(+) is bound by residues isoleucine 175, aspartate 195, arginine 200, 261–263, and 285–286; these read LGI and IY.

The protein belongs to the zinc-containing alcohol dehydrogenase family. Homotetramer. Zn(2+) serves as cofactor.

The protein localises to the cytoplasm. The catalysed reaction is L-threonine + NAD(+) = (2S)-2-amino-3-oxobutanoate + NADH + H(+). Its pathway is amino-acid degradation; L-threonine degradation via oxydo-reductase pathway; glycine from L-threonine: step 1/2. In terms of biological role, catalyzes the NAD(+)-dependent oxidation of L-threonine to 2-amino-3-ketobutyrate. The polypeptide is L-threonine 3-dehydrogenase (Xanthomonas campestris pv. campestris (strain ATCC 33913 / DSM 3586 / NCPPB 528 / LMG 568 / P 25)).